The following is a 181-amino-acid chain: 3-hydroxyacyl-[acyl-carrier-protein] dehydratase FabZ (181 aa).

Residue His54 is part of the active site.

It belongs to the thioester dehydratase family. FabZ subfamily.

It is found in the cytoplasm. It carries out the reaction a (3R)-hydroxyacyl-[ACP] = a (2E)-enoyl-[ACP] + H2O. Involved in unsaturated fatty acids biosynthesis. Catalyzes the dehydration of short chain beta-hydroxyacyl-ACPs and long chain saturated and unsaturated beta-hydroxyacyl-ACPs. The polypeptide is 3-hydroxyacyl-[acyl-carrier-protein] dehydratase FabZ (Yersinia pestis).